Reading from the N-terminus, the 176-residue chain is Kunitz-type U19-barytoxin-Tl1a (176 aa).

A signal peptide spans 1-18; sequence MNFELIYVSSLLLGICLA. BPTI/Kunitz inhibitor domains follow at residues 28–78 and 106–156; these read CNLP…MEKC and CSLE…ESFC. 6 cysteine pairs are disulfide-bonded: C28-C78, C37-C61, C53-C74, C106-C156, C115-C139, and C131-C152. A disordered region spans residues 155–176; that stretch reads FCAPGNSPRPEEETRKRTKQSY.

It belongs to the venom Kunitz-type family. Expressed by the venom gland.

The protein localises to the secreted. Functionally, serine protease inhibitor that inhibits trypsin at a molar ratio of 1:1. The protein is Kunitz-type U19-barytoxin-Tl1a of Trittame loki (Brush-footed trapdoor spider).